The chain runs to 315 residues: Serine/threonine-protein phosphatase PP2A catalytic subunit 3 (315 aa).

Positions 62, 64, 90, and 122 each coordinate Mn(2+). His123 acts as the Proton donor in catalysis. Mn(2+)-binding residues include His172 and His247. The disordered stretch occupies residues 294 to 315; it reads QFEPAPRENEPHTTRRVPDYFL. Over residues 298-315 the composition is skewed to basic and acidic residues; that stretch reads APRENEPHTTRRVPDYFL. Leu315 carries the post-translational modification Leucine methyl ester.

This sequence belongs to the PPP phosphatase family. PP-2A subfamily. Mn(2+) serves as cofactor. Post-translationally, reversibly methyl esterified on Leu-315 by leucine carboxyl methyltransferase 1 (PPM1) and protein phosphatase methylesterase 1 (PPE1). Carboxyl methylation influences the affinity of the catalytic subunit for the different regulatory subunits, thereby modulating the PP2A holoenzyme's substrate specificity, enzyme activity and cellular localization.

The catalysed reaction is O-phospho-L-seryl-[protein] + H2O = L-seryl-[protein] + phosphate. It carries out the reaction O-phospho-L-threonyl-[protein] + H2O = L-threonyl-[protein] + phosphate. The chain is Serine/threonine-protein phosphatase PP2A catalytic subunit 3 (Ppn3) from Paramecium tetraurelia.